A 342-amino-acid chain; its full sequence is Protein RecA (342 aa).

It belongs to the RecA family.

The protein resides in the cytoplasm. Its function is as follows. Can catalyze the hydrolysis of ATP in the presence of single-stranded DNA, the ATP-dependent uptake of single-stranded DNA by duplex DNA, and the ATP-dependent hybridization of homologous single-stranded DNAs. It interacts with LexA causing its activation and leading to its autocatalytic cleavage. This chain is Protein RecA, found in Pectobacterium carotovorum (Erwinia carotovora).